The following is a 1411-amino-acid chain: Regulating synaptic membrane exocytosis protein 2 (1411 aa).

The tract at residues 1 to 33 is disordered; sequence MSAPVGPRGRLAPIPAASQPPLQPEMPDLSHLT. Positions 26–185 constitute a RabBD domain; the sequence is MPDLSHLTEE…TKSGAWFYNS (160 aa). The segment at 117 to 173 adopts an FYVE-type zinc-finger fold; that stretch reads KGDAPTCGICHKTKFADGCGHNCSYCQTKFCARCGGRVSLRSNKVMWVCNLCRKQQE. Residues Cys123, Cys126, Cys139, Cys142, Cys147, Cys150, Cys165, and Cys168 each contribute to the Zn(2+) site. Composition is skewed to basic and acidic residues over residues 203–216, 273–287, 318–329, 348–366, 382–401, and 410–434; these read NEEA…KLHE, DQNR…REEY, DSDHLSYRDSNR, RDEY…RYRS, EQMR…RHSD, and EDSR…RRAA. Disordered regions lie at residues 203 to 598 and 623 to 650; these read NEEA…SERQ and SGVD…WQPS. A Phosphoserine modification is found at Ser400. Residues 451–463 show a composition bias toward polar residues; that stretch reads GPSSYAQRTTNHS. A compositionally biased stretch (basic and acidic residues) spans 475-492; sequence DRPDLRRTDSLRKQHHLD. Over residues 510 to 521 the composition is skewed to polar residues; the sequence is RNDSLSSDQSES. Residues 528–537 are compositionally biased toward basic residues; it reads KPHKSKKGGK. The span at 558–568 shows a compositional bias: acidic residues; that stretch reads SCDDVEIESES. Basic and acidic residues-rich tracts occupy residues 569 to 583 and 634 to 644; these read VSEK…RKTS and NEEHSHSDKHP. The PDZ domain occupies 668-754; it reads DGSVPRDSGA…EPQVELVVSR (87 aa). At Thr689 the chain carries Phosphothreonine. A disordered region spans residues 762–793; it reads IPDSTHAQLESSSSSFESQKMDRPSISVTSPM. A phosphoserine mark is found at Ser791 and Ser794. In terms of domain architecture, C2 1 spans 805–928; it reads LSGQLSIKLW…ALLDDEPHWY (124 aa). Disordered regions lie at residues 939-973 and 993-1190; these read PLPH…SEVS and DLQS…STET. Composition is skewed to polar residues over residues 994–1015 and 1049–1059; these read LQSS…SPSG and RTMTGHYNTIS. The span at 1060–1113 shows a compositional bias: basic and acidic residues; that stretch reads RMDRHRVMDDHYSPDRDRDCEAADRQPYHRSRSTEQRPLLERTTTRSRSTERPD. A compositionally biased stretch (polar residues) spans 1143 to 1153; it reads GSVQTSPSSTP. The residue at position 1148 (Ser1148) is a Phosphoserine. Residues 1257–1375 form the C2 2 domain; sequence AMGDIQVGMM…ELSNMVIGWF (119 aa). Phosphoserine occurs at positions 1396 and 1399.

As to quaternary structure, interacts with RAB3A and RAB3B that have been activated by GTP-binding. Interacts with RAB3C, RAB3D and RAB26. Interacts with TSPOAP1 and RIMBP2. Interacts with PPFIA3 and PPFIA4. Interacts via its zinc finger with the first C2 domain of UNC13A. Forms a complex consisting of UNC13A, RIMS2 and RAB3A. Heterodimer with PCLO. Part of a ternary complex involving PCLO and EPAC2. As to expression, widely expressed. Expressed in melanocytes. In fetal tissues, predominantly expressed in the brain. In the retina, expressed in the outer plexiform layer (at protein level). In the cerebellum, expressed in Purkinje cells (at protein level). In the pancreas, expressed in Langerhans islets (at protein level).

The protein resides in the cell membrane. It is found in the synapse. It localises to the presynaptic cell membrane. Its function is as follows. Rab effector involved in exocytosis. May act as scaffold protein. Plays a role in dendrite formation by melanocytes. The protein is Regulating synaptic membrane exocytosis protein 2 (RIMS2) of Homo sapiens (Human).